The sequence spans 162 residues: Transcription elongation factor GreA (162 aa).

Residues 46–77 (RENAEYKAAREEQTRLNNMVTRLQEEIERAQV) adopt a coiled-coil conformation.

This sequence belongs to the GreA/GreB family.

Its function is as follows. Necessary for efficient RNA polymerase transcription elongation past template-encoded arresting sites. The arresting sites in DNA have the property of trapping a certain fraction of elongating RNA polymerases that pass through, resulting in locked ternary complexes. Cleavage of the nascent transcript by cleavage factors such as GreA or GreB allows the resumption of elongation from the new 3'terminus. GreA releases sequences of 2 to 3 nucleotides. The polypeptide is Transcription elongation factor GreA (Treponema pallidum (strain Nichols)).